Consider the following 643-residue polypeptide: Probable extracellular metalloproteinase 4 (643 aa).

An N-terminal signal peptide occupies residues 1–18 (MHGLLLAGLLALPLNVFA). Positions 19–254 (HPTESHSSGV…VHSVVDYVSA (236 aa)) are excised as a propeptide. The tract at residues 49-69 (SDAVPKQDGESFTTSSTGDDN) is disordered. Positions 58-69 (ESFTTSSTGDDN) are enriched in polar residues. N-linked (GlcNAc...) asparagine glycosylation is found at asparagine 271 and asparagine 420. Histidine 437 is a binding site for Zn(2+). Residue glutamate 438 is part of the active site. A Zn(2+)-binding site is contributed by histidine 441. N-linked (GlcNAc...) asparagine glycosylation is found at asparagine 603 and asparagine 629.

The protein belongs to the peptidase M36 family. Zn(2+) is required as a cofactor.

The protein resides in the secreted. In terms of biological role, secreted metalloproteinase probably acting as a virulence factor. This chain is Probable extracellular metalloproteinase 4 (MEP4), found in Trichophyton verrucosum (strain HKI 0517).